The following is a 99-amino-acid chain: Small ribosomal subunit protein eS24 (99 aa).

This sequence belongs to the eukaryotic ribosomal protein eS24 family.

This chain is Small ribosomal subunit protein eS24, found in Methanothrix thermoacetophila (strain DSM 6194 / JCM 14653 / NBRC 101360 / PT) (Methanosaeta thermophila).